The following is a 126-amino-acid chain: Large ribosomal subunit protein bL17 (126 aa).

This sequence belongs to the bacterial ribosomal protein bL17 family. As to quaternary structure, part of the 50S ribosomal subunit. Contacts protein L32.

In Magnetococcus marinus (strain ATCC BAA-1437 / JCM 17883 / MC-1), this protein is Large ribosomal subunit protein bL17.